The primary structure comprises 207 residues: Guanylate kinase (207 aa).

Residues 5 to 184 (GNLFIVSAPS…ALADLKSIIF (180 aa)) enclose the Guanylate kinase-like domain. An ATP-binding site is contributed by 12 to 19 (APSGAGKS).

Belongs to the guanylate kinase family.

It is found in the cytoplasm. The catalysed reaction is GMP + ATP = GDP + ADP. Its function is as follows. Essential for recycling GMP and indirectly, cGMP. This is Guanylate kinase from Shewanella denitrificans (strain OS217 / ATCC BAA-1090 / DSM 15013).